A 380-amino-acid polypeptide reads, in one-letter code: Queuine tRNA-ribosyltransferase (380 aa).

Catalysis depends on D96, which acts as the Proton acceptor. Residues 96-100 (DSGGF), D150, Q193, and G220 contribute to the substrate site. The RNA binding stretch occupies residues 251-257 (GVGAPDS). Residue D270 is the Nucleophile of the active site. The tract at residues 275–279 (TRIAR) is RNA binding; important for wobble base 34 recognition. C308, C310, C313, and H339 together coordinate Zn(2+).

This sequence belongs to the queuine tRNA-ribosyltransferase family. As to quaternary structure, homodimer. Within each dimer, one monomer is responsible for RNA recognition and catalysis, while the other monomer binds to the replacement base PreQ1. Requires Zn(2+) as cofactor.

It catalyses the reaction 7-aminomethyl-7-carbaguanine + guanosine(34) in tRNA = 7-aminomethyl-7-carbaguanosine(34) in tRNA + guanine. It participates in tRNA modification; tRNA-queuosine biosynthesis. In terms of biological role, catalyzes the base-exchange of a guanine (G) residue with the queuine precursor 7-aminomethyl-7-deazaguanine (PreQ1) at position 34 (anticodon wobble position) in tRNAs with GU(N) anticodons (tRNA-Asp, -Asn, -His and -Tyr). Catalysis occurs through a double-displacement mechanism. The nucleophile active site attacks the C1' of nucleotide 34 to detach the guanine base from the RNA, forming a covalent enzyme-RNA intermediate. The proton acceptor active site deprotonates the incoming PreQ1, allowing a nucleophilic attack on the C1' of the ribose to form the product. After dissociation, two additional enzymatic reactions on the tRNA convert PreQ1 to queuine (Q), resulting in the hypermodified nucleoside queuosine (7-(((4,5-cis-dihydroxy-2-cyclopenten-1-yl)amino)methyl)-7-deazaguanosine). The protein is Queuine tRNA-ribosyltransferase of Streptococcus uberis (strain ATCC BAA-854 / 0140J).